A 513-amino-acid polypeptide reads, in one-letter code: Tigger transposable element-derived protein 4 (513 aa).

The 52-residue stretch at 12 to 63 (PVTVKKKKSLSIEEKIDIINAVESGKKKAEIAAEYGIKKNSLSSIMKNKDKV) folds into the HTH psq-type domain. 2 consecutive DNA-binding regions (H-T-H motif) follow at residues 39 to 59 (KAEIAAEYGIKKNSLSSIMKN) and 108 to 139 (PMLRLKANDFAQKLGHNDFKCSNGWLDRFKSR). Positions 75-146 (KRKRLRTAFY…KSRYGLVFRA (72 aa)) constitute an HTH CENPB-type domain. A DDE-1 domain is found at 174 to 375 (YHPKNVFNVK…VTPETIVKSY (202 aa)). A compositionally biased stretch (basic and acidic residues) spans 433 to 448 (TQKDDAEWAGESKQDE). The disordered stretch occupies residues 433–473 (TQKDDAEWAGESKQDETGLYTSDEEEEDSGALEVDLPSPSK).

This sequence belongs to the tigger transposable element derived protein family.

It is found in the nucleus. In Mus musculus (Mouse), this protein is Tigger transposable element-derived protein 4 (Tigd4).